The sequence spans 425 residues: Trigger factor (425 aa).

The PPIase FKBP-type domain maps to 158 to 231 (GDLVRVNMEV…VEEVYKRTLP (74 aa)).

It belongs to the FKBP-type PPIase family. Tig subfamily.

It localises to the cytoplasm. The catalysed reaction is [protein]-peptidylproline (omega=180) = [protein]-peptidylproline (omega=0). Its function is as follows. Involved in protein export. Acts as a chaperone by maintaining the newly synthesized protein in an open conformation. Functions as a peptidyl-prolyl cis-trans isomerase. The sequence is that of Trigger factor (tig) from Thermotoga maritima (strain ATCC 43589 / DSM 3109 / JCM 10099 / NBRC 100826 / MSB8).